The primary structure comprises 884 residues: Telomerase reverse transcriptase (884 aa).

In terms of domain architecture, Reverse transcriptase spans 422–725 (CRNHNSYTLS…TVIQFCAMHI (304 aa)). Positions 530, 670, and 671 each coordinate Mg(2+).

This sequence belongs to the reverse transcriptase family. Telomerase subfamily. As to quaternary structure, catalytic subunit of the telomerase holoenzyme complex composed minimally of EST2 and the telomerase RNA template component.

The protein resides in the nucleus. It localises to the chromosome. It is found in the telomere. The enzyme catalyses DNA(n) + a 2'-deoxyribonucleoside 5'-triphosphate = DNA(n+1) + diphosphate. Functionally, telomerase is a ribonucleoprotein enzyme essential for the replication of chromosome termini in most eukaryotes. It elongates telomeres. It is a reverse transcriptase that adds simple sequence repeats to chromosome ends by copying a template sequence within the RNA component of the enzyme. This Saccharomyces cerevisiae (strain ATCC 204508 / S288c) (Baker's yeast) protein is Telomerase reverse transcriptase (EST2).